The chain runs to 311 residues: tRNA dimethylallyltransferase (311 aa).

13-20 (GPTASGKT) lines the ATP pocket. 15-20 (TASGKT) is a substrate binding site. 2 interaction with substrate tRNA regions span residues 38–41 (DSMQ) and 166–170 (QRVLR).

This sequence belongs to the IPP transferase family. In terms of assembly, monomer. It depends on Mg(2+) as a cofactor.

The catalysed reaction is adenosine(37) in tRNA + dimethylallyl diphosphate = N(6)-dimethylallyladenosine(37) in tRNA + diphosphate. In terms of biological role, catalyzes the transfer of a dimethylallyl group onto the adenine at position 37 in tRNAs that read codons beginning with uridine, leading to the formation of N6-(dimethylallyl)adenosine (i(6)A). The chain is tRNA dimethylallyltransferase from Staphylococcus aureus (strain Mu3 / ATCC 700698).